The following is a 682-amino-acid chain: Potassium-transporting ATPase ATP-binding subunit (682 aa).

The next 4 helical transmembrane spans lie at 35–55 (VMFI…AMAG), 62–82 (ATFT…ANFA), 219–239 (IALT…TATI), and 254–274 (VLVA…LSAI). Catalysis depends on Asp-307, which acts as the 4-aspartylphosphate intermediate. ATP contacts are provided by residues Asp-344, Glu-348, 377-384 (FTAQTRMS), and Lys-395. The Mg(2+) site is built by Asp-518 and Asp-522. 3 consecutive transmembrane segments (helical) span residues 588–608 (FAII…LNVM), 616–636 (AILS…PLAL), and 656–676 (IYGL…DLLL).

The protein belongs to the cation transport ATPase (P-type) (TC 3.A.3) family. Type IA subfamily. The system is composed of three essential subunits: KdpA, KdpB and KdpC.

It is found in the cell inner membrane. The catalysed reaction is K(+)(out) + ATP + H2O = K(+)(in) + ADP + phosphate + H(+). Part of the high-affinity ATP-driven potassium transport (or Kdp) system, which catalyzes the hydrolysis of ATP coupled with the electrogenic transport of potassium into the cytoplasm. This subunit is responsible for energy coupling to the transport system and for the release of the potassium ions to the cytoplasm. The sequence is that of Potassium-transporting ATPase ATP-binding subunit from Klebsiella pneumoniae (strain 342).